We begin with the raw amino-acid sequence, 929 residues long: Patatin-like phospholipase domain-containing protein CNE02340 (929 aa).

Residues 37–85 (QPLDGDSSPLSPRSFSLPPESPQLSTASVKAPPPTWKYGPDNGTLRSGR) form a disordered region. Residues 43-54 (SSPLSPRSFSLP) are compositionally biased toward low complexity. A helical membrane pass occupies residues 126-146 (WPLLFFIFFIIYLEFSAYVIT). In terms of domain architecture, PNPLA spans 301–493 (LCLSGGASFG…REDIPLGSLH (193 aa)). The GXSXG motif lies at 332–336 (GTSAG). S334 serves as the catalytic Nucleophile. D480 serves as the catalytic Proton acceptor. Disordered regions lie at residues 644–765 (ALSH…NFGD), 778–806 (LSSPFRSIRSNTSSSSNNVQSPSSSQRFR), and 818–929 (VSES…QDGA). Polar residues-rich tracts occupy residues 652–664 (NDPATSLPETNPE) and 745–764 (PTHSPIATESPQRNYTSNFG). A compositionally biased stretch (low complexity) spans 779 to 806 (SSPFRSIRSNTSSSSNNVQSPSSSQRFR). Positions 856-878 (VESHSDRSEDEMLHSGANVKEEY) are enriched in basic and acidic residues.

It belongs to the PLPL family.

Its subcellular location is the membrane. Probable lipid hydrolase. This Cryptococcus neoformans var. neoformans serotype D (strain JEC21 / ATCC MYA-565) (Filobasidiella neoformans) protein is Patatin-like phospholipase domain-containing protein CNE02340.